Reading from the N-terminus, the 661-residue chain is MFMRYIMVEEQTLKTGSQELEEKADYNMRYYAHLMKLSKEKPAEFWGSLAQDLLDWYEPWKETMRQEDPMTRWFIGGKINASYNAVDRHLNGPRKFKAAVIWESELGERKIVTYQDMFYEVNRWANALRSLGVGKGDRVTIYMPLTPEGIAAMLASARIGAIHSVIFAGFGSQAIADRVEDAKAKVVITADAYPRRGKVVELKKTVDEALNSLGERSPVQHVLVYRRMKTDVNMKEGRDVFFDEVGKYRYVEPERMDSNDPLFILYTSGTTGKPKGIMHSTGGYLTGTAVMLLWSYGLSQENDVLFNTSDIGWIVGHSYITYSPLIMGRTVVIYESAPDYPYPDKWAEIIERYRATTFGTSATALRYFMKYGDEYVKNHDLSSIRIIVTNGEVLNYSPWKWGLEVLGGGKVFMSHQWWQTETGAPNLGYLPGIIYMPMKSGPASGFPLPGNFVEVLDENGNPSAPRVRGYLVMRPPFPPNMMMGMWNDNGERLKKTYFSKFGSLYYPGDFAMVDEDGYIWVLGRADETLKIAAHRIGAGEVESAITSHPSVAEAAVIGVPDSVKGEEVHAFVVLKQGYAPSSELAKDIQSHVRKVMGPIVSPQIHFVDKLPKTRSGKVMRRVIKAVMMGSSAGDLTTIEDEASMDEIKKAVEELKKELKTS.

The active site involves Asp526. Residue Lys617 is modified to N6-acetyllysine.

It belongs to the ATP-dependent AMP-binding enzyme family. Homotetramer.

The catalysed reaction is 3-hydroxypropanoate + ATP + CoA = 3-hydroxypropanoyl-CoA + AMP + diphosphate. Functionally, plays a role in the autotrophic CO(2) fixation pathway. Activates 3-hydroxypropionate to its CoA ester. Can also activate propionate, and to a lesser extent acrylate, acetate and butyrate. The chain is 3-hydroxypropionyl-coenzyme A synthetase from Metallosphaera sedula (strain ATCC 51363 / DSM 5348 / JCM 9185 / NBRC 15509 / TH2).